Reading from the N-terminus, the 471-residue chain is MVDVSETTERCVVHKRQGQDGGDAAWRGVQKKLRDFYGSAIYDSWLSALVYSGNENGRVVLLVPTRFIKEWILVHYLERILKYWQDESDAVYSVDICVSDGVGVQPQMAEHPDGAVDGPPVVMVGGTYDHLSSPLDPRFTFDNFVVGKPNELAFAAARRVAESSAPIPGSNPLFLYGGVGLGKTHLMHAIAWYILNSSVKRKIAYLSAEKFMYQYVTALRSKDIMLFKEQFRSVDILMVDDVQFISGKDSTQEEFFHTFNALIDQNKQLVISADRSPSDLDGVEDRIKSRLGWGLVADINETTFELRLGILQLKIEKMGVHVPNEVLEFLAKNIKSNIRELEGALNKVVAHSSLVGRSVTIESASGILSDLLRANHRMVTVGMIQKKVAEFFGIKLEDMYSARRLRALARPRQVAMYLAKRLTQKSLPDIGKSFGGRDHATVIHAVKQIEKFMEDDAKLADDINLLIRMLR.

Residues M1–V91 form a domain I, interacts with DnaA modulators region. Residues V91 to S133 are domain II. The tract at residues P134–S352 is domain III, AAA+ region. G180, G182, K183, and T184 together coordinate ATP. Positions S353–R471 are domain IV, binds dsDNA.

Belongs to the DnaA family. As to quaternary structure, oligomerizes as a right-handed, spiral filament on DNA at oriC.

The protein resides in the cytoplasm. Plays an essential role in the initiation and regulation of chromosomal replication. ATP-DnaA binds to the origin of replication (oriC) to initiate formation of the DNA replication initiation complex once per cell cycle. Binds the DnaA box (a 9 base pair repeat at the origin) and separates the double-stranded (ds)DNA. Forms a right-handed helical filament on oriC DNA; dsDNA binds to the exterior of the filament while single-stranded (ss)DNA is stabiized in the filament's interior. The ATP-DnaA-oriC complex binds and stabilizes one strand of the AT-rich DNA unwinding element (DUE), permitting loading of DNA polymerase. After initiation quickly degrades to an ADP-DnaA complex that is not apt for DNA replication. Binds acidic phospholipids. The polypeptide is Chromosomal replication initiator protein DnaA (Anaplasma marginale (strain St. Maries)).